Here is a 245-residue protein sequence, read N- to C-terminus: Orotidine 5'-phosphate decarboxylase (245 aa).

Residues D22, K44, 71-80 (DLKFHDIPNT), T131, R192, Q201, G221, and R222 contribute to the substrate site. K73 serves as the catalytic Proton donor.

It belongs to the OMP decarboxylase family. Type 1 subfamily. Homodimer.

The enzyme catalyses orotidine 5'-phosphate + H(+) = UMP + CO2. The protein operates within pyrimidine metabolism; UMP biosynthesis via de novo pathway; UMP from orotate: step 2/2. Its function is as follows. Catalyzes the decarboxylation of orotidine 5'-monophosphate (OMP) to uridine 5'-monophosphate (UMP). The sequence is that of Orotidine 5'-phosphate decarboxylase from Salmonella paratyphi A (strain ATCC 9150 / SARB42).